Reading from the N-terminus, the 675-residue chain is Protein brown (675 aa).

At 1 to 419 (MQESGGSSGQ…TEDLRNIRSG (419 aa)) the chain is on the cytoplasmic side. The ABC transporter domain occupies 34–261 (YSFWNECRKK…EVVAESHESL (228 aa)). Residue 66–73 (GGSGAGKT) coordinates ATP. The interval 229-249 (EDSFETPSGESSASGSGSKSI) is disordered. Residues 236–248 (SGESSASGSGSKS) are compositionally biased toward low complexity. A helical membrane pass occupies residues 420–440 (LIAFGFFMITAVTLSLMYSGI). At 441-460 (GGLTQRTVQDVGGSIFMLSN) the chain is on the extracellular side. The chain crosses the membrane as a helical span at residues 461 to 481 (EMIFTFSYGVTYIFPAALPII). Residues 482–497 (RREVGEGTYSLSAYYV) lie on the Cytoplasmic side of the membrane. The helical transmembrane segment at 498–518 (ALVLSFVPVAFFKGYVFLSVI) threads the bilayer. Residues 519–531 (YASIYYTRGFLLY) are Extracellular-facing. A helical transmembrane segment spans residues 532-552 (LSMGFLMSLSAVAAVGYGVFL). Over 553–568 (SSLFESDKMASECAAP) the chain is Cytoplasmic. A helical membrane pass occupies residues 569–589 (FDLIFLIFGGTYMNVDTVPGL). Topologically, residues 590–644 (KYLSLFFYSNEALMYKFWIDIDNIDCPVNEDHPCIKTGVEVLQQGSYRNADYTYW) are extracellular. Residues 645 to 665 (LDCFSLVVVAVIFHIVSFGLV) traverse the membrane as a helical segment. Topologically, residues 666 to 675 (RRYIHRSGYY) are cytoplasmic.

The protein belongs to the ABC transporter superfamily. ABCG family. Eye pigment precursor importer (TC 3.A.1.204) subfamily. In terms of assembly, may form a heterodimer with w/white.

The protein localises to the membrane. The enzyme catalyses guanine(out) + ATP + H2O = guanine(in) + ADP + phosphate + H(+). The catalysed reaction is riboflavin(in) + ATP + H2O = riboflavin(out) + ADP + phosphate + H(+). It catalyses the reaction (6S)-5,6,7,8-tetrahydrofolate(out) + ATP + H2O = (6S)-5,6,7,8-tetrahydrofolate(in) + ADP + phosphate + H(+). Its function is as follows. ATP-dependent transporter of the ATP-binding cassette (ABC) family which transports various molecules including bioamines, neurotransmitters and metabolic intermediates. In the eye and probably in association with w/white, required for the transport of the eye red pigment precursor, guanine, into pigment cell granules. In Malpighian tubules, involved in guanine uptake. Probably in association with w/white, involved in aging-induced intestinal stem cell proliferation in the midgut by regulating tetrahydrofolate transport. The protein is Protein brown of Drosophila melanogaster (Fruit fly).